Here is a 131-residue protein sequence, read N- to C-terminus: Small ribosomal subunit protein uS11 (131 aa).

Belongs to the universal ribosomal protein uS11 family. In terms of assembly, part of the 30S ribosomal subunit. Interacts with proteins S7 and S18. Binds to IF-3.

Functionally, located on the platform of the 30S subunit, it bridges several disparate RNA helices of the 16S rRNA. Forms part of the Shine-Dalgarno cleft in the 70S ribosome. The sequence is that of Small ribosomal subunit protein uS11 from Clostridium acetobutylicum (strain ATCC 824 / DSM 792 / JCM 1419 / IAM 19013 / LMG 5710 / NBRC 13948 / NRRL B-527 / VKM B-1787 / 2291 / W).